We begin with the raw amino-acid sequence, 267 residues long: 5'-nucleotidase SurE (267 aa).

The a divalent metal cation site is built by D14, D15, S45, and N100.

The protein belongs to the SurE nucleotidase family. It depends on a divalent metal cation as a cofactor.

It is found in the cytoplasm. It carries out the reaction a ribonucleoside 5'-phosphate + H2O = a ribonucleoside + phosphate. Its function is as follows. Nucleotidase that shows phosphatase activity on nucleoside 5'-monophosphates. In Methanosarcina mazei (strain ATCC BAA-159 / DSM 3647 / Goe1 / Go1 / JCM 11833 / OCM 88) (Methanosarcina frisia), this protein is 5'-nucleotidase SurE.